Consider the following 206-residue polypeptide: Ras-related protein ralB-A (206 aa).

21–28 lines the GTP pocket; the sequence is GSGGVGKS. The Effector region signature appears at 43–51; that stretch reads YEPTKADSY. Residues 68 to 72 and 128 to 131 each bind GTP; these read DTAGQ and NKSD. Residues 180 to 189 show a composition bias toward basic and acidic residues; that stretch reads KMSENKDKNG. The tract at residues 180 to 206 is disordered; the sequence is KMSENKDKNGKKSGKSKKGFKQRCCLL. A compositionally biased stretch (basic residues) spans 190–200; that stretch reads KKSGKSKKGFK. Residue C203 is modified to Cysteine methyl ester. A lipid anchor (S-geranylgeranyl cysteine) is attached at C203. A propeptide spans 204–206 (removed in mature form); the sequence is CLL.

It belongs to the small GTPase superfamily. Ras family. In terms of assembly, interacts with ralbp1 and rap1gds1. Weakly expressed in adult tissues and highest levels were found in heart, brain and testes.

It localises to the cell membrane. It is found in the midbody. The enzyme catalyses GTP + H2O = GDP + phosphate + H(+). Functionally, multifunctional GTPase involved in a variety of cellular processes including gene expression, cell migration, cell proliferation, oncogenic transformation and membrane trafficking. Accomplishes its multiple functions by interacting with distinct downstream effectors. Acts as a GTP sensor for GTP-dependent exocytosis of dense core vesicles. Required both to stabilize the assembly of the exocyst complex and to localize functional exocyst complexes to the leading edge of migrating cells. Required for suppression of apoptosis. In late stages of cytokinesis, upon completion of the bridge formation between dividing cells, mediates exocyst recruitment to the midbody to drive abscission. Regulates the actin cytoskeleton to play a role in gastrulation or neurulation. During the cleavage stages, the GTP-bound form induces a cortical reaction that affects the localization of pigment granules. Activated by the FGF pathway via ras and ral-GDS, but independently of raf. Directs ralbp1 to the plasma membrane. Involved in ligand-dependent receptor mediated endocytosis of the EGF and insulin receptors. This is Ras-related protein ralB-A (ralb-a) from Xenopus laevis (African clawed frog).